The sequence spans 283 residues: Cyclin-C (283 aa).

In terms of domain architecture, Cyclin N-terminal spans 46–144 (NVIQALGEHL…VLECEFYLLE (99 aa)). A disordered region spans residues 252-283 (TILSKMPKPKPPPNSEGEQGPNGSQNSSYSQS). The segment covering 272–283 (PNGSQNSSYSQS) has biased composition (polar residues). Position 275 is a phosphoserine (Ser-275).

Belongs to the cyclin family. Cyclin C subfamily. Component of the Mediator complex, which is composed of MED1, MED4, MED6, MED7, MED8, MED9, MED10, MED11, MED12, MED13, MED13L, MED14, MED15, MED16, MED17, MED18, MED19, MED20, MED21, MED22, MED23, MED24, MED25, MED26, MED27, MED29, MED30, MED31, CCNC, CDK8 and CDC2L6/CDK11. The MED12, MED13, CCNC and CDK8 subunits form a distinct module termed the CDK8 module. Mediator containing the CDK8 module is less active than Mediator lacking this module in supporting transcriptional activation. Individual preparations of the Mediator complex lacking one or more distinct subunits have been variously termed ARC, CRSP, DRIP, PC2, SMCC and TRAP. The cylin/CDK pair formed by CCNC/CDK8 also associates with the large subunit of RNA polymerase II.

The protein resides in the nucleus. Functionally, component of the Mediator complex, a coactivator involved in regulated gene transcription of nearly all RNA polymerase II-dependent genes. Mediator functions as a bridge to convey information from gene-specific regulatory proteins to the basal RNA polymerase II transcription machinery. Mediator is recruited to promoters by direct interactions with regulatory proteins and serves as a scaffold for the assembly of a functional preinitiation complex with RNA polymerase II and the general transcription factors. Binds to and activates cyclin-dependent kinase CDK8 that phosphorylates the CTD (C-terminal domain) of the large subunit of RNA polymerase II (RNAp II), which may inhibit the formation of a transcription initiation complex. The chain is Cyclin-C (CCNC) from Bos taurus (Bovine).